Here is a 352-residue protein sequence, read N- to C-terminus: C-C chemokine receptor type 5 (352 aa).

At 1 to 30 (MDYQVSSPTYDIDYYTSEPCQKINVKQIAG) the chain is on the extracellular side. The residue at position 3 (Tyr-3) is a Sulfotyrosine. 2 O-linked (GalNAc...) serine glycosylation sites follow: Ser-6 and Ser-7. Sulfotyrosine occurs at positions 10, 14, and 15. Intrachain disulfides connect Cys-20–Cys-269 and Cys-101–Cys-178. Residues 31-58 (RLLPPLYSLVFIFGFVGNILVVLILINC) traverse the membrane as a helical segment. The Cytoplasmic portion of the chain corresponds to 59-68 (KRLKSMTDIY). Residues 69-89 (LLNLAISDLLFLLTVPFWAHY) traverse the membrane as a helical segment. Residues 90–102 (AAAQWDFGNTMCQ) lie on the Extracellular side of the membrane. Residues 103–124 (LLTGLYFIGFFSGIFFIILLTI) form a helical membrane-spanning segment. At 125 to 141 (DRYLAIVHAVFALKART) the chain is on the cytoplasmic side. Residues 142–166 (VTFGVVTSVITWVVAVFASLPGIIF) form a helical membrane-spanning segment. Residues 167-198 (TRSQREGLHYTCSSHFPYSQYQFWKNFQTLKI) lie on the Extracellular side of the membrane. Residues 199–218 (VILGLVLPLLVMVICYSGIL) traverse the membrane as a helical segment. The Cytoplasmic portion of the chain corresponds to 219 to 235 (KTLLRCRNEKKRHRAVR). Residues 236-260 (LIFTIMIVYFLFWAPYNIVLLLNTF) form a helical membrane-spanning segment. The Extracellular segment spans residues 261 to 277 (QEFFGLNNCSSSNRLDQ). A helical membrane pass occupies residues 278–301 (AMQVTETLGMTHCCINPIIYAFVG). The Cytoplasmic portion of the chain corresponds to 302–352 (EKFRNYLLVFFQKHIAKRFCKCCSIFQQEAPERASSVYTRSTGEQEISVGL). S-palmitoyl cysteine attachment occurs at residues Cys-321, Cys-323, and Cys-324. Phosphoserine; by BARK1 is present on residues Ser-336, Ser-337, Ser-342, and Ser-349.

Belongs to the G-protein coupled receptor 1 family. As to quaternary structure, interacts with PRAF2. Efficient ligand binding to CCL3/MIP-1alpha and CCL4/MIP-1beta requires sulfation, O-glycosylation and sialic acid modifications. Glycosylation on Ser-6 is required for efficient binding of CCL4. Interacts with GRK2. Interacts with ARRB1 and ARRB2. Interacts with CNIH4. Interacts with S100A4; this interaction stimulates T-lymphocyte chemotaxis. Sulfated on at least 2 of the N-terminal tyrosines. Sulfation is required for efficient binding of the chemokines, CCL3 and CCL4. Post-translationally, palmitoylation in the C-terminal is important for cell surface expression. In terms of processing, phosphorylation on serine residues in the C-terminal is stimulated by binding CC chemokines especially by APO-RANTES. O-glycosylated, but not N-glycosylated. Ser-6 appears to be the major site even if Ser-7 may be also O-glycosylated. Also sialylated glycans present which contribute to chemokine binding. Thr-16 and Ser-17 may also be glycosylated and, if so, with small moieties such as a T-antigen.

The protein localises to the cell membrane. Receptor for a number of inflammatory CC-chemokines including CCL3/MIP-1-alpha, CCL4/MIP-1-beta and RANTES and subsequently transduces a signal by increasing the intracellular calcium ion level. May play a role in the control of granulocytic lineage proliferation or differentiation. Participates in T-lymphocyte migration to the infection site by acting as a chemotactic receptor. This Theropithecus gelada (Gelada baboon) protein is C-C chemokine receptor type 5 (CCR5).